Reading from the N-terminus, the 273-residue chain is Undecaprenyl-diphosphatase (273 aa).

The next 7 membrane-spanning stretches (helical) occupy residues 13–35 (GLVE…VFGN), 45–62 (VFEI…VFEY), 82–102 (FVLN…LFDK), 108–128 (LFNP…ILWV), 186–206 (TEFS…YDVL), 219–239 (LILI…KALL), and 250–270 (FAYY…SGWI).

This sequence belongs to the UppP family.

The protein resides in the cell inner membrane. The enzyme catalyses di-trans,octa-cis-undecaprenyl diphosphate + H2O = di-trans,octa-cis-undecaprenyl phosphate + phosphate + H(+). Its function is as follows. Catalyzes the dephosphorylation of undecaprenyl diphosphate (UPP). Confers resistance to bacitracin. The polypeptide is Undecaprenyl-diphosphatase (Neisseria gonorrhoeae (strain NCCP11945)).